Here is a 273-residue protein sequence, read N- to C-terminus: MVFYKYSGSGNDFLIVQSFKKKDFSNLAKQVCHRHEGFGADGLVVVLPSKDYDYEWDFYNSDGSKAGMCGNASRCVGLFAYQHAIASKNHVFLAGKREISICIEEPNIIESNLGNYKILDVIPALRCEKFFSSGSVLEHIPTFYLIDTGVPHLVGFVENKEGLNSLNTLELRALRHEFNANINIAFIENKETIFLQTYERGVEDFTLACGTGMAAVFIAARIFYNTPKKAALIPKSNESLELSLKNDGIFYKGAVRYIGMSVLGMRVFENGCF.

Substrate contacts are provided by Asn11 and Asn60. The active-site Proton donor is the Cys69. Substrate-binding positions include 70–71 (GN), Asn181, and 199–200 (ER). The Proton acceptor role is filled by Cys209. 210–211 (GT) is a binding site for substrate.

The protein belongs to the diaminopimelate epimerase family. In terms of assembly, homodimer.

The protein resides in the cytoplasm. The enzyme catalyses (2S,6S)-2,6-diaminopimelate = meso-2,6-diaminopimelate. It functions in the pathway amino-acid biosynthesis; L-lysine biosynthesis via DAP pathway; DL-2,6-diaminopimelate from LL-2,6-diaminopimelate: step 1/1. In terms of biological role, catalyzes the stereoinversion of LL-2,6-diaminopimelate (L,L-DAP) to meso-diaminopimelate (meso-DAP), a precursor of L-lysine and an essential component of the bacterial peptidoglycan. This chain is Diaminopimelate epimerase, found in Helicobacter pylori (strain ATCC 700392 / 26695) (Campylobacter pylori).